A 102-amino-acid chain; its full sequence is Putative septation protein SpoVG (102 aa).

The tract at residues 83-102 is disordered; that stretch reads TDEVIPDKNATSDNEESDEA.

Belongs to the SpoVG family.

Functionally, could be involved in septation. The chain is Putative septation protein SpoVG from Staphylococcus epidermidis (strain ATCC 35984 / DSM 28319 / BCRC 17069 / CCUG 31568 / BM 3577 / RP62A).